We begin with the raw amino-acid sequence, 443 residues long: Protein king tubby (443 aa).

Disordered regions lie at residues 57–80 and 98–191; these read TNGS…NNMR and HELE…EGDV. Polar residues predominate over residues 67-80; it reads VAMNTSRNHSNNMR. Low complexity predominate over residues 113 to 128; it reads QQQQSASHSANSTQSQ. A Phosphoserine modification is found at serine 136. Over residues 177–186 the composition is skewed to gly residues; it reads NGTGNGTGGE.

It belongs to the TUB family.

The protein resides in the cytoplasm. The protein localises to the nucleus. Its subcellular location is the cell projection. It localises to the cilium membrane. It is found in the rhabdomere. The sequence is that of Protein king tubby from Drosophila sechellia (Fruit fly).